Here is a 908-residue protein sequence, read N- to C-terminus: 26S proteasome non-ATPase regulatory subunit 2 (908 aa).

An N-acetylmethionine modification is found at Met1. The interval 1 to 51 (MEEGGRDKTPVQSQQPSATTPSGADEKSSGKERRDAGEKDKEQELSEEDKQ) is disordered. A phosphothreonine mark is found at Thr9 and Thr20. Residues 10 to 22 (PVQSQQPSATTPS) are compositionally biased toward polar residues. Residues 24–51 (ADEKSSGKERRDAGEKDKEQELSEEDKQ) are compositionally biased toward basic and acidic residues. Residues Ser29 and Ser147 each carry the phosphoserine modification. Tyr194 carries the post-translational modification Phosphotyrosine. Phosphoserine occurs at positions 361 and 363. 5 PC repeats span residues 409 to 442 (SAAA…YIKS), 443 to 479 (GALL…TMRL), 480 to 514 (GSIF…SMEV), 517 to 551 (VTAL…TELK), and 560 to 589 (LGLG…PFRS). Lys551 is modified (N6-acetyllysine). Residues 623 to 643 (KEKEEDKDKKEKKDKDKKEAP) are compositionally biased toward basic and acidic residues. A disordered region spans residues 623 to 645 (KEKEEDKDKKEKKDKDKKEAPAD). 2 PC repeats span residues 692–723 (LALA…EVSY) and 742–757 (AAML…KDPN). The tract at residues 708 to 903 (DTLSKFSHDA…LEGFVILRKN (196 aa)) is required for interaction with UBLCP1.

It belongs to the proteasome subunit S2 family. As to quaternary structure, component of the 19S proteasome regulatory particle complex. The 26S proteasome consists of a 20S core particle (CP) and two 19S regulatory subunits (RP). The regulatory particle is made of a lid composed of 9 subunits, a base containing 6 ATPases and few additional components including PSMD2. Interacts with RPGRIP1L. Interacts with CRY1 in a KDM8-dependent manner. Interacts (via C-terminus) with phosphatase UBLCP1 (via ubiquitin-like domain); the interaction recruits UBLCP1 to the 19S regulatory particle where it dephosphorylates 19S subunit PSMC2/RPT1 which impairs PSMC2 ATPase activity and disrupts 26S proteasome assembly.

In terms of biological role, component of the 26S proteasome, a multiprotein complex involved in the ATP-dependent degradation of ubiquitinated proteins. This complex plays a key role in the maintenance of protein homeostasis by removing misfolded or damaged proteins, which could impair cellular functions, and by removing proteins whose functions are no longer required. Therefore, the proteasome participates in numerous cellular processes, including cell cycle progression, apoptosis, or DNA damage repair. Functionally, binds to the intracellular domain of tumor necrosis factor type 1 receptor. The binding domain of TRAP1 and TRAP2 resides outside the death domain of TNFR1. The sequence is that of 26S proteasome non-ATPase regulatory subunit 2 (Psmd2) from Mus musculus (Mouse).